A 382-amino-acid polypeptide reads, in one-letter code: Succinate--CoA ligase [ADP-forming] subunit beta (382 aa).

Residues K9–K236 enclose the ATP-grasp domain. ATP is bound by residues K45, G52–G54, E91, V94, and E99. Residues N191 and D205 each contribute to the Mg(2+) site. Residues N256 and G313–T315 contribute to the substrate site.

Belongs to the succinate/malate CoA ligase beta subunit family. As to quaternary structure, heterotetramer of two alpha and two beta subunits. The cofactor is Mg(2+).

The enzyme catalyses succinate + ATP + CoA = succinyl-CoA + ADP + phosphate. It catalyses the reaction GTP + succinate + CoA = succinyl-CoA + GDP + phosphate. The protein operates within carbohydrate metabolism; tricarboxylic acid cycle; succinate from succinyl-CoA (ligase route): step 1/1. In terms of biological role, succinyl-CoA synthetase functions in the citric acid cycle (TCA), coupling the hydrolysis of succinyl-CoA to the synthesis of either ATP or GTP and thus represents the only step of substrate-level phosphorylation in the TCA. The beta subunit provides nucleotide specificity of the enzyme and binds the substrate succinate, while the binding sites for coenzyme A and phosphate are found in the alpha subunit. The sequence is that of Succinate--CoA ligase [ADP-forming] subunit beta from Halobacterium salinarum (strain ATCC 29341 / DSM 671 / R1).